The following is a 356-amino-acid chain: Tyrosine recombinase XerS (356 aa).

The Core-binding (CB) domain occupies 16 to 121 (TMPWYILEYY…ALSSLYKYLT (106 aa)). The region spanning 169 to 354 (EFLQYIDREY…VNDEQKNALN (186 aa)) is the Tyr recombinase domain. Catalysis depends on residues Arg-210, Lys-234, His-306, Arg-309, and His-332. Residue Tyr-341 is the O-(3'-phospho-DNA)-tyrosine intermediate of the active site.

The protein belongs to the 'phage' integrase family. XerS subfamily.

Its subcellular location is the cytoplasm. FtsK is required for recombination. Site-specific tyrosine recombinase, which acts by catalyzing the cutting and rejoining of the recombining DNA molecules. Essential to convert dimers of the bacterial chromosome into monomers to permit their segregation at cell division. In Streptococcus gordonii (strain Challis / ATCC 35105 / BCRC 15272 / CH1 / DL1 / V288), this protein is Tyrosine recombinase XerS.